Here is a 473-residue protein sequence, read N- to C-terminus: Chromosomal replication initiator protein DnaA (473 aa).

The domain I, interacts with DnaA modulators stretch occupies residues 1–90 (MSSSLWLQCL…KRVTAPKSET (90 aa)). Positions 91-136 (IAPARTRTAADVAAESSAPAQLQARKPVHNIWRDEEPVAVDLNHRS) are domain II. The segment at 137–353 (NVNPKHKFNN…GALNRVIANA (217 aa)) is domain III, AAA+ region. The ATP site is built by Gly-181, Gly-183, Lys-184, and Thr-185. The segment at 354–473 (NFTGRPITID…YSNLIRTLSS (120 aa)) is domain IV, binds dsDNA.

It belongs to the DnaA family. As to quaternary structure, oligomerizes as a right-handed, spiral filament on DNA at oriC.

Its subcellular location is the cytoplasm. In terms of biological role, plays an essential role in the initiation and regulation of chromosomal replication. ATP-DnaA binds to the origin of replication (oriC) to initiate formation of the DNA replication initiation complex once per cell cycle. Binds the DnaA box (a 9 base pair repeat at the origin) and separates the double-stranded (ds)DNA. Forms a right-handed helical filament on oriC DNA; dsDNA binds to the exterior of the filament while single-stranded (ss)DNA is stabiized in the filament's interior. The ATP-DnaA-oriC complex binds and stabilizes one strand of the AT-rich DNA unwinding element (DUE), permitting loading of DNA polymerase. After initiation quickly degrades to an ADP-DnaA complex that is not apt for DNA replication. Binds acidic phospholipids. This Vibrio atlanticus (strain LGP32) (Vibrio splendidus (strain Mel32)) protein is Chromosomal replication initiator protein DnaA.